We begin with the raw amino-acid sequence, 165 residues long: Phosphopantetheine adenylyltransferase (165 aa).

This sequence belongs to the eukaryotic CoaD family.

The protein resides in the cytoplasm. It carries out the reaction (R)-4'-phosphopantetheine + ATP + H(+) = 3'-dephospho-CoA + diphosphate. It functions in the pathway cofactor biosynthesis; coenzyme A biosynthesis. In terms of biological role, reversibly transfers an adenylyl group from ATP to 4'-phosphopantetheine, yielding dephospho-CoA (dPCoA) and pyrophosphate. This Thermococcus kodakarensis (strain ATCC BAA-918 / JCM 12380 / KOD1) (Pyrococcus kodakaraensis (strain KOD1)) protein is Phosphopantetheine adenylyltransferase.